The sequence spans 337 residues: WRKY transcription factor 23 (337 aa).

The tract at residues 100–160 (INPPATPNSS…KNNQKRQREA (61 aa)) is disordered. A compositionally biased stretch (low complexity) spans 106–118 (PNSSSISSASSEA). The span at 142–155 (HTKKQLKAKKNNQK) shows a compositional bias: basic residues. A DNA-binding region (WRKY) is located at residues 168–233 (SEVDHLEDGY…YEGQHTHISP (66 aa)).

It belongs to the WRKY group II-c family.

It is found in the nucleus. In terms of biological role, transcription factor. Interacts specifically with the W box (5'-(T)TGAC[CT]-3'), a frequently occurring elicitor-responsive cis-acting element. The protein is WRKY transcription factor 23 (WRKY23) of Arabidopsis thaliana (Mouse-ear cress).